The following is a 304-amino-acid chain: Protein Largen (304 aa).

A compositionally biased stretch (low complexity) spans 1–22 (MSAKSKGNPSSSSAAEGPPAAS). 4 disordered regions span residues 1–27 (MSAK…TKVK), 66–109 (QLED…PPAH), 114–133 (LTVL…TPVR), and 236–304 (EPVH…TTTV). Residues 33 to 70 (IVEDLELVLGDLKDVAKELKEVVDQIDTLTSDLQLEDE) are a coiled coil. A compositionally biased stretch (low complexity) spans 77–91 (TDTLNSSSSGTTASS). 2 stretches are compositionally biased toward pro residues: residues 120 to 129 (PNPPPPPPRL) and 275 to 289 (FPPP…PAAP).

Regulator of cell size that promotes cell size increase independently of mTOR and Hippo signaling pathways. Acts by stimulating the translation of specific mRNAs, including those encoding proteins affecting mitochondrial functions. Increases mitochondrial mass and respiration. The polypeptide is Protein Largen (Prr16) (Mus musculus (Mouse)).